Reading from the N-terminus, the 210-residue chain is Glutathione S-transferase mdpJ (210 aa).

The region spanning 2–83 (SFGTLYTHNP…YCNDERSSLR (82 aa)) is the GST N-terminal domain. In terms of domain architecture, GST C-terminal spans 77–200 (DERSSLRILQ…VAGGVPDLGL (124 aa)).

Belongs to the GST superfamily.

It functions in the pathway secondary metabolite biosynthesis. Functionally, glutathione S-transferase; part of the gene cluster that mediates the biosynthesis of monodictyphenone, a prenyl xanthone derivative. The pathway begins with the synthesis of atrochrysone thioester by the polyketide synthase (PKS) mdpG. The atrochrysone carboxyl ACP thioesterase mdpF then breaks the thioester bond and releases the atrochrysone carboxylic acid from mdpG. The atrochrysone carboxylic acid is then converted to atrochrysone which is further transformed into emodin anthrone. The next step is performed by the anthrone oxygenase mdpH that catalyzes the oxidation of emodinanthrone to emodin. Emodin is further modified to yield monodictyphenone via several steps involving mdpB, mdpC mdpJ, mdpK and mdpL. These enzymes with xptA, xptB and xptC are also proposed to be involved in the synthesis of shamixanthone from emodin. Especially, direct reduction of emodin by the short chain dehydrogenase mdpC followed by dehydration catalyzed by the scytalone dehydratase-like protein mdpB gives loss of oxygen and formation of chrysophanol intermediate in two simple steps. The protein is Glutathione S-transferase mdpJ of Emericella nidulans (strain FGSC A4 / ATCC 38163 / CBS 112.46 / NRRL 194 / M139) (Aspergillus nidulans).